A 333-amino-acid polypeptide reads, in one-letter code: Dipeptide transport system permease protein DppB (333 aa).

6 consecutive transmembrane segments (helical) span residues I9–F29, A103–V123, A136–V156, A197–T217, L256–L276, and V306–V326. The ABC transmembrane type-1 domain occupies F96–N328.

It belongs to the binding-protein-dependent transport system permease family. OppBC subfamily.

The protein resides in the cell inner membrane. In terms of biological role, part of the ABC transporter DppBCDF involved in dipeptide transport. Responsible for the translocation of the substrate across the membrane. This is Dipeptide transport system permease protein DppB (dppB) from Haemophilus influenzae (strain ATCC 51907 / DSM 11121 / KW20 / Rd).